A 427-amino-acid polypeptide reads, in one-letter code: Phosphoglucosamine mutase (427 aa).

The active-site Phosphoserine intermediate is the S94. S94, D228, D230, and D232 together coordinate Mg(2+). At S94 the chain carries Phosphoserine.

It belongs to the phosphohexose mutase family. The cofactor is Mg(2+). Post-translationally, activated by phosphorylation.

The enzyme catalyses alpha-D-glucosamine 1-phosphate = D-glucosamine 6-phosphate. Catalyzes the conversion of glucosamine-6-phosphate to glucosamine-1-phosphate. The chain is Phosphoglucosamine mutase from Thermotoga sp. (strain RQ2).